The chain runs to 217 residues: GTPase IMAP family member GIMD1 (217 aa).

In terms of domain architecture, AIG1-type G spans 6-217 (KMIINLAVFG…ENHFQVLSLA (212 aa)). Residues 15 to 23 (GRTQSGKSS), serine 36, and 148 to 150 (HAE) each bind GTP.

This sequence belongs to the TRAFAC class TrmE-Era-EngA-EngB-Septin-like GTPase superfamily. AIG1/Toc34/Toc159-like paraseptin GTPase family. IAN subfamily.

The polypeptide is GTPase IMAP family member GIMD1 (Gimd1) (Mus musculus (Mouse)).